The following is a 550-amino-acid chain: uncharacterized protein (550 aa).

A signal peptide spans 1-13; the sequence is MAGALFEPSFAAA. Residues 312–358 form a disordered region; it reads DAQPDPHLSGDEPPSRPLTPETTLFEALTPDPEPDPPATHAPAELIT.

This sequence to M.tuberculosis Rv3776.

This is an uncharacterized protein from Mycobacterium tuberculosis (strain CDC 1551 / Oshkosh).